We begin with the raw amino-acid sequence, 345 residues long: 1-aminocyclopropane-1-carboxylate oxidase homolog 7 (345 aa).

A Glycyl lysine isopeptide (Lys-Gly) (interchain with G-Cter in ubiquitin) cross-link involves residue Lys-16. Residues 194-293 (KGLHMICHYY…RISIACFFSS (100 aa)) enclose the Fe2OG dioxygenase domain. The Fe cation site is built by His-218, Asp-220, and His-274. Residue Arg-284 participates in 2-oxoglutarate binding.

It belongs to the iron/ascorbate-dependent oxidoreductase family. Requires Fe(2+) as cofactor.

In Arabidopsis thaliana (Mouse-ear cress), this protein is 1-aminocyclopropane-1-carboxylate oxidase homolog 7.